Here is a 155-residue protein sequence, read N- to C-terminus: SsrA-binding protein (155 aa).

This sequence belongs to the SmpB family.

It is found in the cytoplasm. Required for rescue of stalled ribosomes mediated by trans-translation. Binds to transfer-messenger RNA (tmRNA), required for stable association of tmRNA with ribosomes. tmRNA and SmpB together mimic tRNA shape, replacing the anticodon stem-loop with SmpB. tmRNA is encoded by the ssrA gene; the 2 termini fold to resemble tRNA(Ala) and it encodes a 'tag peptide', a short internal open reading frame. During trans-translation Ala-aminoacylated tmRNA acts like a tRNA, entering the A-site of stalled ribosomes, displacing the stalled mRNA. The ribosome then switches to translate the ORF on the tmRNA; the nascent peptide is terminated with the 'tag peptide' encoded by the tmRNA and targeted for degradation. The ribosome is freed to recommence translation, which seems to be the essential function of trans-translation. This Bordetella bronchiseptica (strain ATCC BAA-588 / NCTC 13252 / RB50) (Alcaligenes bronchisepticus) protein is SsrA-binding protein.